The primary structure comprises 82 residues: Protein Vpu (82 aa).

At 1 to 7 (MQPLQIS) the chain is on the extracellular side. The chain crosses the membrane as a helical span at residues 8–28 (AIVALVVAAIIAIVVWSIALL). Residues 29-82 (EYRKLLRQRKIDRLIDRIRERAEDSGNESEGDQEELSALVEMGGHDAPWDIDDL) lie on the Cytoplasmic side of the membrane. Phosphoserine; by host CK2 occurs at positions 53 and 57.

Belongs to the HIV-1 VPU protein family. Homopentamer. Interacts with host CD4 and BRTC; these interactions induce proteasomal degradation of CD4. Interacts with host BST2; this interaction leads to the degradation of host BST2. Interacts with host FBXW11. Interacts with host AP1M1; this interaction plays a role in the mistrafficking and subsequent degradation of host BST2. Interacts with host RANBP2; this interaction allows Vpu to down-regulate host BLM sumoylation. In terms of processing, phosphorylated by host CK2. This phosphorylation is necessary for interaction with human BTRC and degradation of CD4.

The protein resides in the host membrane. Its activity is regulated as follows. Ion channel activity is inhibited by hexamethylene amiloride in vitro. Its function is as follows. Enhances virion budding by targeting host CD4 and Tetherin/BST2 to proteasome degradation. Degradation of CD4 prevents any unwanted premature interactions between viral Env and its host receptor CD4 in the endoplasmic reticulum. Degradation of antiretroviral protein Tetherin/BST2 is important for virion budding, as BST2 tethers new viral particles to the host cell membrane. Mechanistically, Vpu bridges either CD4 or BST2 to BTRC, a substrate recognition subunit of the Skp1/Cullin/F-box protein E3 ubiquitin ligase, induces their ubiquitination and subsequent proteasomal degradation. The alteration of the E3 ligase specificity by Vpu seems to promote the degradation of host IKBKB, leading to NF-kappa-B down-regulation and subsequent apoptosis. Acts as a viroporin that forms an oligomeric ion channel in membranes. Modulates the host DNA repair mechanisms to promote degradation of nuclear viral cDNA in cells that are already productively infected in order to suppress immune sensing and proviral hyper-integration (superinfection). Manipulates PML-NBs and modulates SUMOylation of host BLM protein thereby enhancing its DNA-end processing activity toward viral unintegrated linear DNA. Also inhibits RAD52-mediated homologous repair of viral cDNA, preventing the generation of dead-end circular forms of single copies of the long terminal repeat and permitting sustained nucleolytic attack. This Homo sapiens (Human) protein is Protein Vpu.